The following is a 51-amino-acid chain: Large ribosomal subunit protein bL33 (51 aa).

The protein belongs to the bacterial ribosomal protein bL33 family.

The chain is Large ribosomal subunit protein bL33 from Psychrobacter arcticus (strain DSM 17307 / VKM B-2377 / 273-4).